A 304-amino-acid chain; its full sequence is Nod factor export ATP-binding protein I (304 aa).

In terms of domain architecture, ABC transporter spans 6-236; it reads IDFRNVEKRF…EIGCDVIEIY (231 aa). An ATP-binding site is contributed by 38–45; that stretch reads GPNGAGKT.

It belongs to the ABC transporter superfamily. Lipooligosaccharide exporter (TC 3.A.1.102) family. In terms of assembly, the complex is composed of two ATP-binding proteins (NodI) and two transmembrane proteins (NodJ).

The protein localises to the cell inner membrane. Part of the ABC transporter complex NodIJ involved in the export of the nodulation factors (Nod factors), the bacterial signal molecules that induce symbiosis and subsequent nodulation induction. Nod factors are LCO (lipo-chitin oligosaccharide), a modified beta-1,4-linked N-acetylglucosamine oligosaccharide. This subunit is responsible for energy coupling to the transport system. This chain is Nod factor export ATP-binding protein I, found in Burkholderia lata (strain ATCC 17760 / DSM 23089 / LMG 22485 / NCIMB 9086 / R18194 / 383).